Reading from the N-terminus, the 345-residue chain is Trace amine-associated receptor 6 (345 aa).

Topologically, residues 1–32 (MGSNSSPPAVLQLCYENVNGSCVKTPYSPGPR) are extracellular. N-linked (GlcNAc...) asparagine glycosylation is present at Asn-19. Cystine bridges form between Cys-22/Cys-186 and Cys-105/Cys-190. The chain crosses the membrane as a helical span at residues 33-53 (VLLYAVFGFGAVLAVFGNLLV). Residues 54 to 68 (MISILHFKQLHSPTN) are Cytoplasmic-facing. Residues 69–89 (FLIASLACADFWVGVSVMPFS) traverse the membrane as a helical segment. Over 90 to 107 (MVRSIESCWYFGRSFCTF) the chain is Extracellular. A helical membrane pass occupies residues 108-128 (HTCCDVAFCYSSLFHLSFISI). Topologically, residues 129–147 (DRYIAVTDPLVYPTKFTVS) are cytoplasmic. Residues 148–168 (VSGICISISWILPLAYSGAVF) traverse the membrane as a helical segment. Residues 169–202 (YTGVYADGLEEVSDAVNCVGGCQVVVNQNWVLID) lie on the Extracellular side of the membrane. The chain crosses the membrane as a helical span at residues 203–223 (FLSFLIPTLVMIILYGNIFLV). At 224–259 (ARQQAKKIETVGNKAESSSESYKARVARRERKAAKT) the chain is on the cytoplasmic side. Residues 260–276 (LGITVVAFMISWLPYSI) traverse the membrane as a helical segment. Over 277-282 (DSLVDA) the chain is Extracellular. Residues 283-302 (FMGFITPAYIYEICVWCAYY) traverse the membrane as a helical segment. At 303–345 (NSAMNPLIYALFYPWFKKAIKVIMSGQVFKNSSATMNLFSEQI) the chain is on the cytoplasmic side.

Belongs to the G-protein coupled receptor 1 family.

The protein resides in the cell membrane. In terms of biological role, olfactory receptor specific for trace amines, such as beta-phenylethylamine (beta-PEA). Trace amine compounds are enriched in animal body fluids and act on trace amine-associated receptors (TAARs) to elicit both intraspecific and interspecific innate behaviors. Beta-PEA-binding causes a conformation change that triggers signaling via G(s)-class of G alpha proteins (GNAL or GNAS). In Rattus norvegicus (Rat), this protein is Trace amine-associated receptor 6 (Taar6).